A 1184-amino-acid chain; its full sequence is Protocadherin-12 (1184 aa).

The N-terminal stretch at 1 to 24 (MMQLLQLLLGLLGPGGYLFLLGDC) is a signal peptide. Residues 25 to 718 (QEVTTLTVKY…PGALSMSMLT (694 aa)) are Extracellular-facing. Cadherin domains lie at 28-135 (TTLT…QPRF), 136-244 (PKGE…SPAF), 245-352 (AESS…IPSI), 355-460 (TWAS…APVF), and 461-565 (EKSR…APEV). N415 carries an N-linked (GlcNAc...) asparagine glycan. Residues N582, N659, and N662 are each glycosylated (N-linked (GlcNAc...) asparagine). The 112-residue stretch at 600–711 (PAGTDTPPLA…LRDSARKPGA (112 aa)) folds into the Cadherin 6 domain. Residues 719 to 739 (VICLAVLLGIFGLILALFMSI) traverse the membrane as a helical segment. At 740 to 1184 (CRTEKKDNRA…RGSSSSSRCL (445 aa)) the chain is on the cytoplasmic side. Disordered stretches follow at residues 854-928 (RQRN…ESGP) and 973-1023 (QFQP…DPEE). At S859 the chain carries Phosphoserine. Residues 1012–1023 (PEQEEGPLDPEE) are compositionally biased toward acidic residues. A Phosphoserine modification is found at S1062. The disordered stretch occupies residues 1153–1184 (SAASGMKVQGDPGGKTGTEGKSRGSSSSSRCL). Over residues 1175–1184 (RGSSSSSRCL) the composition is skewed to low complexity.

Post-translationally, cleaved by ADAM10 close to the transmembrane domain to release the Protocadherin-12, secreted form in the serum. Cleavage results in reduced cellular adhesion in a cell migration assay. Expressed in highly vascularized tissues including the heart and placenta, but most tissues contain a low level of expression. Prominent expression in the spleen. Present in villous and extravillous trophoblast (at protein level).

The protein resides in the cell membrane. The protein localises to the cell junction. It is found in the secreted. In terms of biological role, cellular adhesion molecule that may play an important role in cell-cell interactions at interendothelial junctions. Acts as a regulator of cell migration, probably via increasing cell-cell adhesion. Promotes homotypic calcium-dependent aggregation and adhesion and clusters at intercellular junctions. Unable to bind to catenins, weakly associates with the cytoskeleton. The sequence is that of Protocadherin-12 from Homo sapiens (Human).